The following is a 202-amino-acid chain: D-alanyl-D-alanine dipeptidase (202 aa).

Zn(2+) is bound by residues histidine 116 and aspartate 123. Glutamate 181 functions as the Proton donor/acceptor in the catalytic mechanism. Residue histidine 184 coordinates Zn(2+).

The protein belongs to the peptidase M15D family. Requires Zn(2+) as cofactor.

It carries out the reaction D-alanyl-D-alanine + H2O = 2 D-alanine. Its function is as follows. Catalyzes hydrolysis of the D-alanyl-D-alanine dipeptide. The protein is D-alanyl-D-alanine dipeptidase (vanXB) of Enterococcus faecalis (strain ATCC 700802 / V583).